Reading from the N-terminus, the 257-residue chain is Ribosome-recycling factor, mitochondrial (257 aa).

Belongs to the RRF family.

It is found in the mitochondrion. Necessary for protein synthesis in mitochondria. Functions as a ribosome recycling factor in mitochondria. In Debaryomyces hansenii (strain ATCC 36239 / CBS 767 / BCRC 21394 / JCM 1990 / NBRC 0083 / IGC 2968) (Yeast), this protein is Ribosome-recycling factor, mitochondrial (RRF1).